A 191-amino-acid polypeptide reads, in one-letter code: Protein GrpE (191 aa).

The segment covering 1-15 (MGKEEKNNIEDKALD) has biased composition (basic and acidic residues). Residues 1–35 (MGKEEKNNIEDKALDNEQEMDQESTSKAVEELSIE) form a disordered region.

The protein belongs to the GrpE family. As to quaternary structure, homodimer.

It is found in the cytoplasm. In terms of biological role, participates actively in the response to hyperosmotic and heat shock by preventing the aggregation of stress-denatured proteins, in association with DnaK and GrpE. It is the nucleotide exchange factor for DnaK and may function as a thermosensor. Unfolded proteins bind initially to DnaJ; upon interaction with the DnaJ-bound protein, DnaK hydrolyzes its bound ATP, resulting in the formation of a stable complex. GrpE releases ADP from DnaK; ATP binding to DnaK triggers the release of the substrate protein, thus completing the reaction cycle. Several rounds of ATP-dependent interactions between DnaJ, DnaK and GrpE are required for fully efficient folding. This chain is Protein GrpE, found in Francisella philomiragia subsp. philomiragia (strain ATCC 25017 / CCUG 19701 / FSC 153 / O#319-036).